We begin with the raw amino-acid sequence, 121 residues long: Spindle and kinetochore-associated protein 2 (121 aa).

Ser101 carries the post-translational modification Phosphoserine.

It belongs to the SKA2 family. In terms of assembly, component of the SKA1 complex, composed of SKA1, SKA2 and SKA3. Forms a heterodimer with SKA1; the heterodimer interacting with SKA3. The core SKA1 complex is composed of 2 SKA1-SKA2 heterodimers, each heterodimer interacting with a molecule of the SKA3 homodimer. The core SKA1 complex associates with microtubules and forms oligomeric assemblies. Interacts directly with SKA1. Binds directly to microtubules; but with a much lower affinity than SKA1. May interact with NR3C1; the relevance of such interaction remains unclear in vivo.

It is found in the cytoplasm. The protein resides in the cytoskeleton. The protein localises to the spindle. It localises to the chromosome. Its subcellular location is the centromere. It is found in the kinetochore. Functionally, component of the SKA1 complex, a microtubule-binding subcomplex of the outer kinetochore that is essential for proper chromosome segregation. Required for timely anaphase onset during mitosis, when chromosomes undergo bipolar attachment on spindle microtubules leading to silencing of the spindle checkpoint. The SKA1 complex is a direct component of the kinetochore-microtubule interface and directly associates with microtubules as oligomeric assemblies. The complex facilitates the processive movement of microspheres along a microtubule in a depolymerization-coupled manner. In the complex, it is required for SKA1 localization. Affinity for microtubules is synergistically enhanced in the presence of the ndc-80 complex and may allow the ndc-80 complex to track depolymerizing microtubules. This is Spindle and kinetochore-associated protein 2 (SKA2) from Homo sapiens (Human).